The chain runs to 332 residues: Cinnamoyl-CoA reductase 2 (332 aa).

NADP(+)-binding positions include glycine 12–alanine 18, arginine 37, lysine 43, aspartate 63–leucine 64, threonine 83–serine 85, tyrosine 156, lysine 160, proline 183–valine 186, and serine 198. Residues cysteine 149 and cysteine 157 are joined by a disulfide bond. Lysine 160 acts as the Proton donor in catalysis.

This sequence belongs to the NAD(P)-dependent epimerase/dehydratase family. Dihydroflavonol-4-reductase subfamily. As to expression, expressed at low levels in leaves, stems and flowers.

It carries out the reaction (E)-cinnamaldehyde + NADP(+) + CoA = (E)-cinnamoyl-CoA + NADPH + H(+). The protein operates within aromatic compound metabolism; phenylpropanoid biosynthesis. Cinnamoyl-CoA reductase probably involved in the formation of phenolic compounds associated with the hypersensitive response. Seems not to be involved in lignin biosynthesis. This chain is Cinnamoyl-CoA reductase 2 (CCR2), found in Arabidopsis thaliana (Mouse-ear cress).